The chain runs to 1070 residues: MLGDGNGGMSTIPGFNQIQFEGFCRFIDQGLAEELYKFPKIEDRDQEIEFQLFVETYQLVEPSIKERDAVYESLTYSSELYVSGGLIWKNSRDMQEQTIFIGNIPLMNSLGTSIVNGIYRIVINQILQSPGIYYRSELNHNGISVYTGTIISDWGGRVELEIDKKARIWARVSRKQKISILVLSSAMGLNLREILENVCYPEIFLSFLSDKEKKKIGSRENAILEFYQQFTCVGGGPVFSESLCKELQKKFFQQRCELGRIGRLNMNQRLNLDIPHNNTFLLPRDILAAADHLIGMKFGMGTLDDMNHLKNKRIRSVADLLQDQFGLALIRLENVVRGTICGAIRHKLIPTPQNLVTSTPLTTTYESFFGLHPLSQVLDRTNPLTQIVHGRKSSYLGPGGLTGRTASFRIRDIHPSHYGRICPIDTSEGINVGLIGSLTIHAKIGHLGSLESPFYEISARSKKVRMLYLSPNRDEYYMIAAGNCLALNRGAREEQVVPARYRQEFLTIAWEQVRLRSFFPFQYFSIGASLIPFIEHNDANRALMSSNMQRQAVPLARSEKCIVGTGLERQVALDSGVPAIAEHEGKIIYTDIDKIILSGNGYTVSIPLVMYQRSNKNTCMHQKTQVQRGKCIKRGQVLADGAATVGGELALGKNILVAYMPWEGYNFEDAVLISERLVYEDVYTSFHIRKYEIQTHVTSQGPERITNEIPHLEAHLLRNLDKNGIVMLGSWVETGDILIGKLTPQLAKESSYAPEDRLLRAILGIQVSTSKETCLKLPTGGRGRVIDVRWIQKKGGSSYNPETIRVYILQKREIKVGDKVAGRHGNKGIISKILPRQDMPYLQDGAPVDMVFNPLGVPSRMNVGQIFECSLGLAGSLLDRHYRVAPFDERYEQEASRKLVFSELYEAGKQTGNPWVFEPECPGKSRIFDGRTGDPFEQPVIIGKPYILKLIHQVADKIHGRSSGHYALVTQQPLRGRAKQGGQRVGEMEVWALEGFGVSHILQEMLTYKSDHIRARQEVLGTTISGRTIPKPEDAPESFRLLVRELRSLALELKHFLISEKNFQINRKEV.

Belongs to the RNA polymerase beta chain family. As to quaternary structure, in plastids the minimal PEP RNA polymerase catalytic core is composed of four subunits: alpha, beta, beta', and beta''. When a (nuclear-encoded) sigma factor is associated with the core the holoenzyme is formed, which can initiate transcription.

It localises to the plastid. Its subcellular location is the chloroplast. The enzyme catalyses RNA(n) + a ribonucleoside 5'-triphosphate = RNA(n+1) + diphosphate. Functionally, DNA-dependent RNA polymerase catalyzes the transcription of DNA into RNA using the four ribonucleoside triphosphates as substrates. The sequence is that of DNA-directed RNA polymerase subunit beta from Populus trichocarpa (Western balsam poplar).